Consider the following 29-residue polypeptide: Small ribosomal subunit protein uS7 (29 aa).

Positions Glu-1 to Arg-29 are disordered. Basic and acidic residues predominate over residues Arg-8 to Arg-29.

Belongs to the universal ribosomal protein uS7 family. As to quaternary structure, part of the 30S ribosomal subunit.

In terms of biological role, one of the primary rRNA binding proteins, it binds directly to 16S rRNA where it nucleates assembly of the head domain of the 30S subunit. Is located at the subunit interface close to the decoding center. The protein is Small ribosomal subunit protein uS7 (rps7) of Methanosarcina thermophila.